The sequence spans 317 residues: Methionyl-tRNA formyltransferase (317 aa).

110–113 is a binding site for (6S)-5,6,7,8-tetrahydrofolate; it reads SLLP.

It belongs to the Fmt family.

The catalysed reaction is L-methionyl-tRNA(fMet) + (6R)-10-formyltetrahydrofolate = N-formyl-L-methionyl-tRNA(fMet) + (6S)-5,6,7,8-tetrahydrofolate + H(+). Attaches a formyl group to the free amino group of methionyl-tRNA(fMet). The formyl group appears to play a dual role in the initiator identity of N-formylmethionyl-tRNA by promoting its recognition by IF2 and preventing the misappropriation of this tRNA by the elongation apparatus. The sequence is that of Methionyl-tRNA formyltransferase from Bacillus pumilus (strain SAFR-032).